The following is a 1131-amino-acid chain: Phytochrome a (1131 aa).

The span at 1-23 (MSSSRPAHSSSSSSRTRQSSQAR) shows a compositional bias: low complexity. The tract at residues 1 to 26 (MSSSRPAHSSSSSSRTRQSSQARILA) is disordered. The GAF domain maps to 219–404 (SMEALCNTVV…VFAVHVNKEF (186 aa)). C324 contributes to the phytochromobilin binding site. 2 PAS domains span residues 620 to 690 (VTSE…LQGK) and 750 to 834 (VEGD…LAGE). Positions 904–1124 (YMRHAINKPL…TFILTAELAA (221 aa)) constitute a Histidine kinase domain.

It belongs to the phytochrome family. In terms of assembly, homodimer. Contains one covalently linked phytochromobilin chromophore.

Functionally, regulatory photoreceptor which exists in two forms that are reversibly interconvertible by light: the Pr form that absorbs maximally in the red region of the spectrum and the Pfr form that absorbs maximally in the far-red region. Photoconversion of Pr to Pfr induces an array of morphogenic responses, whereas reconversion of Pfr to Pr cancels the induction of those responses. Pfr controls the expression of a number of nuclear genes including those encoding the small subunit of ribulose-bisphosphate carboxylase, chlorophyll A/B binding protein, protochlorophyllide reductase, rRNA, etc. It also controls the expression of its own gene(s) in a negative feedback fashion. The sequence is that of Phytochrome a (PHYA) from Sorghum bicolor (Sorghum).